The following is a 511-amino-acid chain: Bifunctional purine biosynthesis protein PurH (511 aa).

Residues 1–145 (MKKRALVSVS…KNHKFVSVIV (145 aa)) enclose the MGS-like domain.

This sequence belongs to the PurH family.

It carries out the reaction (6R)-10-formyltetrahydrofolate + 5-amino-1-(5-phospho-beta-D-ribosyl)imidazole-4-carboxamide = 5-formamido-1-(5-phospho-D-ribosyl)imidazole-4-carboxamide + (6S)-5,6,7,8-tetrahydrofolate. The catalysed reaction is IMP + H2O = 5-formamido-1-(5-phospho-D-ribosyl)imidazole-4-carboxamide. Its pathway is purine metabolism; IMP biosynthesis via de novo pathway; 5-formamido-1-(5-phospho-D-ribosyl)imidazole-4-carboxamide from 5-amino-1-(5-phospho-D-ribosyl)imidazole-4-carboxamide (10-formyl THF route): step 1/1. It functions in the pathway purine metabolism; IMP biosynthesis via de novo pathway; IMP from 5-formamido-1-(5-phospho-D-ribosyl)imidazole-4-carboxamide: step 1/1. In Bacillus cereus (strain ZK / E33L), this protein is Bifunctional purine biosynthesis protein PurH.